We begin with the raw amino-acid sequence, 360 residues long: 45 kDa calcium-binding protein (360 aa).

The first 29 residues, Met1–Ala29, serve as a signal peptide directing secretion. N-linked (GlcNAc...) asparagine glycosylation occurs at Asn33. EF-hand domains lie at Arg96–Glu131, Glu135–Phe170, Met231–Asn266, Trp276–Tyr311, and Asn312–Ser347. Residues Asp109, Asn111, Asp113, Gln115, Glu120, Asp148, Asp150, Asp152, His154, Glu159, Asp244, Asp246, Asp248, Lys250, Glu255, Asp289, Asn291, Asp293, Glu300, Asp325, Asn327, Asp329, and Glu336 each coordinate Ca(2+).

The protein belongs to the CREC family.

The protein localises to the golgi apparatus lumen. In terms of biological role, may regulate calcium-dependent activities in the endoplasmic reticulum lumen or post-ER compartment. The polypeptide is 45 kDa calcium-binding protein (sdf4) (Xenopus laevis (African clawed frog)).